The primary structure comprises 359 residues: GalNAc-alpha-(1-&gt;4)-GalNAc-alpha-(1-&gt;3)-diNAcBac-PP-undecaprenol alpha-1,4-N-acetyl-D-galactosaminyltransferase (359 aa).

Residue E17 coordinates substrate. Residue Y45 participates in UDP-N-acetyl-alpha-D-galactosamine binding. Residue 71 to 74 (RFKK) participates in substrate binding. UDP-N-acetyl-alpha-D-galactosamine is bound by residues H117, R190, K195, V246, and 266 to 274 (EGLPTVLIE). R190 lines the substrate pocket.

The protein belongs to the glycosyltransferase group 1 family.

It is found in the cell inner membrane. The catalysed reaction is N-acetyl-alpha-D-galactosaminyl-(1-&gt;4)-N-acetyl-alpha-D-galactosaminyl-(1-&gt;3)-N,N'-diacetyl-alpha-D-bacillosaminyl-tri-trans,heptacis-undecaprenyl diphosphate + 3 UDP-N-acetyl-alpha-D-galactosamine = [alpha-D-GalNAc-(1-&gt;4)]4-alpha-D-GalNAc-(1-&gt;3)-alpha-D-diNAcBac-tri-trans,hepta-cis-undecaprenyl diphosphate + 3 UDP + 3 H(+). It participates in protein modification; protein glycosylation. Its function is as follows. Processive glycosyltransferase that is part of the biosynthetic pathway of the lipid-linked oligosaccharide (LLO) that serves as the glycan donor in bacterial protein N-glycosylation. Catalyzes the transfer of exactly three alpha-(1-&gt;4)-N-acetylgalactosamine (GalNAc) units to the growing LLO precursor, GalNAc-alpha-(1-&gt;4)-GalNAc-alpha-(1-&gt;3)-diNAcBac-PP-undecaprenyl. Cannot accept UDP-GlcNAc as substrate. This Campylobacter jejuni subsp. jejuni serotype O:2 (strain ATCC 700819 / NCTC 11168) protein is GalNAc-alpha-(1-&gt;4)-GalNAc-alpha-(1-&gt;3)-diNAcBac-PP-undecaprenol alpha-1,4-N-acetyl-D-galactosaminyltransferase.